An 88-amino-acid polypeptide reads, in one-letter code: Small ribosomal subunit protein uS17 (88 aa).

The protein belongs to the universal ribosomal protein uS17 family. As to quaternary structure, part of the 30S ribosomal subunit.

In terms of biological role, one of the primary rRNA binding proteins, it binds specifically to the 5'-end of 16S ribosomal RNA. In Saccharophagus degradans (strain 2-40 / ATCC 43961 / DSM 17024), this protein is Small ribosomal subunit protein uS17.